The following is a 370-amino-acid chain: GTPase Obg (370 aa).

In terms of domain architecture, Obg spans methionine 1–leucine 159. The interval leucine 128–glycine 147 is disordered. The OBG-type G domain maps to alanine 160–serine 334. GTP is bound by residues glycine 166–serine 173, phenylalanine 191–alanine 195, aspartate 213–glycine 216, asparagine 284–aspartate 287, and serine 315–leucine 317. Residues serine 173 and threonine 193 each contribute to the Mg(2+) site.

It belongs to the TRAFAC class OBG-HflX-like GTPase superfamily. OBG GTPase family. Monomer. Requires Mg(2+) as cofactor.

The protein resides in the cytoplasm. Its function is as follows. An essential GTPase which binds GTP, GDP and possibly (p)ppGpp with moderate affinity, with high nucleotide exchange rates and a fairly low GTP hydrolysis rate. Plays a role in control of the cell cycle, stress response, ribosome biogenesis and in those bacteria that undergo differentiation, in morphogenesis control. The protein is GTPase Obg of Burkholderia orbicola (strain MC0-3).